The primary structure comprises 217 residues: Probable transaldolase (217 aa).

Lys-83 acts as the Schiff-base intermediate with substrate in catalysis.

This sequence belongs to the transaldolase family. Type 3B subfamily.

It localises to the cytoplasm. The catalysed reaction is D-sedoheptulose 7-phosphate + D-glyceraldehyde 3-phosphate = D-erythrose 4-phosphate + beta-D-fructose 6-phosphate. Its pathway is carbohydrate degradation; pentose phosphate pathway; D-glyceraldehyde 3-phosphate and beta-D-fructose 6-phosphate from D-ribose 5-phosphate and D-xylulose 5-phosphate (non-oxidative stage): step 2/3. Functionally, transaldolase is important for the balance of metabolites in the pentose-phosphate pathway. This is Probable transaldolase from Ruegeria sp. (strain TM1040) (Silicibacter sp.).